A 214-amino-acid polypeptide reads, in one-letter code: MKVFLIGANGQIGQRLVSLFQDNPDHSIRAMVRKEEQKASLEAAGAEAVLANLEGSPEEIAAAAKGCDAIIFTAGSGGSTGYDKTLLVDLDGAAKAIEAAAIAGIKRFIMVSALQAHNRENWNEALKPYYVAKHYADKILEASGLTYTIIRPGGLRNEPGTGTVSAAKDLERGFISRDDVAKTVIASLDEKNTENRAFDLTEGDTPIAEALKKL.

Catalysis depends on Tyr-129, which acts as the Proton acceptor.

This sequence belongs to the NAD(P)-dependent epimerase/dehydratase family.

This is an uncharacterized protein from Bacillus subtilis (strain 168).